A 335-amino-acid polypeptide reads, in one-letter code: Terpene synthase 4 (335 aa).

Positions 103 to 108 (DDYIFE) match the DDxx(x)D/E motif motif. The short motif at 243 to 251 (NDLYSFNRE) is the NDxxSxxxD/E motif element.

This sequence belongs to the terpene synthase family.

It carries out the reaction (2E,6E)-farnesyl diphosphate + H2O = (6E)-nerolidol + diphosphate. In terms of biological role, terpene synthase that converts its substrate farnesyl diphosphate (FPP) into the sesquiterpene (E)-nerolidol. The protein is Terpene synthase 4 of Dictyostelium discoideum (Social amoeba).